The sequence spans 303 residues: Mycothiol acetyltransferase (303 aa).

N-acetyltransferase domains are found at residues 4-141 and 154-303; these read ITVR…RSLA and IVLR…ANGA. Glu-38 is a 1D-myo-inositol 2-(L-cysteinylamino)-2-deoxy-alpha-D-glucopyranoside binding site. 80–82 serves as a coordination point for acetyl-CoA; that stretch reads AAV. 1D-myo-inositol 2-(L-cysteinylamino)-2-deoxy-alpha-D-glucopyranoside-binding residues include Glu-181, Lys-223, and Glu-234. Acetyl-CoA contacts are provided by residues 238 to 240 and 245 to 251; these read VGI and QGRGLGR. Tyr-272 contributes to the 1D-myo-inositol 2-(L-cysteinylamino)-2-deoxy-alpha-D-glucopyranoside binding site. 277–282 is a binding site for acetyl-CoA; it reads NTAAVN.

It belongs to the acetyltransferase family. MshD subfamily. As to quaternary structure, monomer.

The enzyme catalyses 1D-myo-inositol 2-(L-cysteinylamino)-2-deoxy-alpha-D-glucopyranoside + acetyl-CoA = mycothiol + CoA + H(+). In terms of biological role, catalyzes the transfer of acetyl from acetyl-CoA to desacetylmycothiol (Cys-GlcN-Ins) to form mycothiol. This chain is Mycothiol acetyltransferase, found in Nocardia farcinica (strain IFM 10152).